The following is a 96-amino-acid chain: Putative pterin-4-alpha-carbinolamine dehydratase (96 aa).

Belongs to the pterin-4-alpha-carbinolamine dehydratase family.

It carries out the reaction (4aS,6R)-4a-hydroxy-L-erythro-5,6,7,8-tetrahydrobiopterin = (6R)-L-erythro-6,7-dihydrobiopterin + H2O. In Paraburkholderia xenovorans (strain LB400), this protein is Putative pterin-4-alpha-carbinolamine dehydratase.